A 75-amino-acid polypeptide reads, in one-letter code: Protein myomixer (75 aa).

At 1-5 (MPAVF) the chain is on the cytoplasmic side. Residues 6–28 (LLLRSLVVRLFGSRLAASGVQLL) traverse the membrane as a helical segment. The Extracellular segment spans residues 29 to 75 (RRILTTATGHLGTVLRNIWERISSQQSKEAILGCVLCLLNMHKKVDN). Residues 58-67 (AILGCVLCLL) carry the AxLyCxL motif.

The protein belongs to the MYMX family. In terms of tissue distribution, specifically expressed in the developing myotome.

The protein localises to the cell membrane. Its function is as follows. Myoblast-specific protein that mediates myoblast fusion, an essential step for the formation of multi-nucleated muscle fibers. Involved in membrane fusion downstream of the lipid mixing step mediated by mymk. Acts by generating membrane stresses via its extracellular C-terminus, leading to drive fusion pore formation. The sequence is that of Protein myomixer from Danio rerio (Zebrafish).